We begin with the raw amino-acid sequence, 287 residues long: Co-chaperone protein DjlA (287 aa).

At 1-6 the chain is on the periplasmic side; that stretch reads MQIFGK. A helical membrane pass occupies residues 7 to 30; that stretch reads ILGAFFGFLFGGVFGALFGLFIGH. Over 31 to 287 the chain is Cytoplasmic; sequence QFDKARRLSQ…DLIKKEKGFK (257 aa). Residues 192 to 213 are disordered; that stretch reads GGFGGQQHQSHHSSSHGGWQQA. Residues 221–287 form the J domain; sequence DAYKILGIDA…DLIKKEKGFK (67 aa).

As to quaternary structure, homodimer.

The protein localises to the cell inner membrane. Functionally, regulatory DnaK co-chaperone. Direct interaction between DnaK and DjlA is needed for the induction of the wcaABCDE operon, involved in the synthesis of a colanic acid polysaccharide capsule, possibly through activation of the RcsB/RcsC phosphotransfer signaling pathway. The colanic acid capsule may help the bacterium survive conditions outside the host. The chain is Co-chaperone protein DjlA from Vibrio vulnificus (strain YJ016).